We begin with the raw amino-acid sequence, 154 residues long: Transcription antitermination protein NusB (154 aa).

Belongs to the NusB family.

Involved in transcription antitermination. Required for transcription of ribosomal RNA (rRNA) genes. Binds specifically to the boxA antiterminator sequence of the ribosomal RNA (rrn) operons. This Oleidesulfovibrio alaskensis (strain ATCC BAA-1058 / DSM 17464 / G20) (Desulfovibrio alaskensis) protein is Transcription antitermination protein NusB.